Consider the following 557-residue polypeptide: Dihydroxy-acid dehydratase (557 aa).

Position 47 (Cys47) interacts with [2Fe-2S] cluster. Residue Asp79 participates in Mg(2+) binding. Cys120 is a binding site for [2Fe-2S] cluster. Mg(2+)-binding residues include Asp121 and Lys122. Position 122 is an N6-carboxylysine (Lys122). Position 192 (Cys192) interacts with [2Fe-2S] cluster. Glu444 contacts Mg(2+). Ser470 (proton acceptor) is an active-site residue.

The protein belongs to the IlvD/Edd family. Homodimer. It depends on [2Fe-2S] cluster as a cofactor. Mg(2+) is required as a cofactor.

The catalysed reaction is (2R)-2,3-dihydroxy-3-methylbutanoate = 3-methyl-2-oxobutanoate + H2O. The enzyme catalyses (2R,3R)-2,3-dihydroxy-3-methylpentanoate = (S)-3-methyl-2-oxopentanoate + H2O. It functions in the pathway amino-acid biosynthesis; L-isoleucine biosynthesis; L-isoleucine from 2-oxobutanoate: step 3/4. Its pathway is amino-acid biosynthesis; L-valine biosynthesis; L-valine from pyruvate: step 3/4. Functions in the biosynthesis of branched-chain amino acids. Catalyzes the dehydration of (2R,3R)-2,3-dihydroxy-3-methylpentanoate (2,3-dihydroxy-3-methylvalerate) into 2-oxo-3-methylpentanoate (2-oxo-3-methylvalerate) and of (2R)-2,3-dihydroxy-3-methylbutanoate (2,3-dihydroxyisovalerate) into 2-oxo-3-methylbutanoate (2-oxoisovalerate), the penultimate precursor to L-isoleucine and L-valine, respectively. The protein is Dihydroxy-acid dehydratase of Synechococcus sp. (strain CC9902).